Consider the following 131-residue polypeptide: Hypocretin neuropeptide precursor (131 aa).

A signal peptide spans 1–33 (MNLPSTKVSWAAVTLLLLLLLLPPALLSSGAAA). Pyrrolidone carboxylic acid is present on Gln-34. Disulfide bonds link Cys-39–Cys-45 and Cys-40–Cys-47. Position 66 is a leucine amide (Leu-66). Met-97 is modified (methionine amide). The propeptide at 98 to 131 (GRRAGAEPAPRPCLGRRCSAPAAASVAPGGQSGI) is removed in mature form.

Belongs to the orexin family. In terms of processing, specific enzymatic cleavages at paired basic residues yield the different active peptides. Abundantly expressed in subthalamic nucleus but undetectable in other brain regions tested (hypothalamus was not tested) and in heart, placenta, lung, liver, skeletal muscle, kidney and pancreas.

The protein resides in the rough endoplasmic reticulum. Its subcellular location is the cytoplasmic vesicle. The protein localises to the synapse. Neuropeptides that play a significant role in the regulation of food intake and sleep-wakefulness, possibly by coordinating the complex behavioral and physiologic responses of these complementary homeostatic functions. A broader role in the homeostatic regulation of energy metabolism, autonomic function, hormonal balance and the regulation of body fluids, is also suggested. Functionally, binds to orexin receptors HCRTR1/OX1R and HCRTR2/OX2R with a high affinity. Stimulates food intake. Modulates pituitary luteinizing hormone secretion in an ovarian steroid-dependent manner. Its function is as follows. Binds to orexin receptor HCRTR2/OX2R only. Stimulates food intake. Modulates pituitary luteinizing hormone secretion in an ovarian steroid-dependent manner. This Homo sapiens (Human) protein is Hypocretin neuropeptide precursor.